A 206-amino-acid polypeptide reads, in one-letter code: MAANKNKNQSSLVLHKVIMVGSGGVGKSALTLQFMYDEFVEDYEPTKADSYRKKVVLDGEEVQIDILDTAGQEDYAAIRDNYFRSGEGFLLVFSITEHESFTATAEFREQILRVKAEEDKIPLLVVGNKSDLEDRRQVPMDEARGKAEEWGVQYVETSAKTRANVDKVFFDLMREVRTKKMSENKDKNGKKSGKSKKGFKQRCCLL.

GTP is bound at residue 21 to 28; it reads GSGGVGKS. The short motif at 43-51 is the Effector region element; sequence YEPTKADSY. GTP contacts are provided by residues 68-72 and 128-131; these read DTAGQ and NKSD. The segment covering 180-189 has biased composition (basic and acidic residues); sequence KMSENKDKNG. Positions 180 to 206 are disordered; that stretch reads KMSENKDKNGKKSGKSKKGFKQRCCLL. Positions 190–200 are enriched in basic residues; the sequence is KKSGKSKKGFK. C203 is subject to Cysteine methyl ester. C203 carries the S-geranylgeranyl cysteine lipid modification. Positions 204–206 are cleaved as a propeptide — removed in mature form; the sequence is CLL.

It belongs to the small GTPase superfamily. Ras family. In terms of assembly, interacts with ralbp1 and rap1gds1.

It localises to the cell membrane. The protein resides in the midbody. It catalyses the reaction GTP + H2O = GDP + phosphate + H(+). Functionally, multifunctional GTPase involved in a variety of cellular processes including gene expression, cell migration, cell proliferation, oncogenic transformation and membrane trafficking. Accomplishes its multiple functions by interacting with distinct downstream effectors. Acts as a GTP sensor for GTP-dependent exocytosis of dense core vesicles. Required both to stabilize the assembly of the exocyst complex and to localize functional exocyst complexes to the leading edge of migrating cells. Required for suppression of apoptosis. In late stages of cytokinesis, upon completion of the bridge formation between dividing cells, mediates exocyst recruitment to the midbody to drive abscission. Regulates the actin cytoskeleton to play a role in gastrulation or neurulation. During the cleavage stages, the GTP-bound form induces a cortical reaction that affects the localization of pigment granules. Activated by the FGF pathway via ras and ral-GDS, but independently of raf. Directs ralbp1 to the plasma membrane. Involved in ligand-dependent receptor mediated endocytosis of the EGF and insulin receptors. This chain is Ras-related protein ralB-B (ralb-b), found in Xenopus laevis (African clawed frog).